Reading from the N-terminus, the 538-residue chain is Carboxypeptidase 2 (538 aa).

A signal peptide spans 1–21; sequence MVAYRFLTLISLGLGSHCVSA. N-linked (GlcNAc...) asparagine glycosylation occurs at Asn46. The segment at 53 to 76 is disordered; the sequence is PAFTSPGTVSRGFSDGTSGPTRDE. The Peptidase M14 domain occupies 71-351; it reads GPTRDETMEG…VMAKSVLQTA (281 aa). 3 residues coordinate Zn(2+): His136, Glu139, and His224. Glu322 (proton donor/acceptor) is an active-site residue. N-linked (GlcNAc...) asparagine glycosylation is found at Asn393 and Asn459.

It belongs to the peptidase M14 family. The cofactor is Zn(2+).

The protein localises to the secreted. Its function is as follows. Extracellular metalloprotease that contributes to pathogenicity. The polypeptide is Carboxypeptidase 2 (MCPB) (Trichophyton rubrum (Athlete's foot fungus)).